The chain runs to 383 residues: 2-aminoethylphosphonate--pyruvate transaminase (383 aa).

Position 192 is an N6-(pyridoxal phosphate)lysine (Lys-192).

The protein belongs to the class-V pyridoxal-phosphate-dependent aminotransferase family. PhnW subfamily. In terms of assembly, homodimer. Requires pyridoxal 5'-phosphate as cofactor.

The catalysed reaction is (2-aminoethyl)phosphonate + pyruvate = phosphonoacetaldehyde + L-alanine. Its function is as follows. Involved in phosphonate degradation. The chain is 2-aminoethylphosphonate--pyruvate transaminase from Rhizobium meliloti (strain 1021) (Ensifer meliloti).